A 458-amino-acid chain; its full sequence is Peptidyl-prolyl cis-trans isomerase FKBP4 (458 aa).

N-acetylmethionine; in peptidyl-prolyl cis-trans isomerase FKBP4; alternate is present on Met-1. Position 2 is an N-acetylthreonine; in peptidyl-prolyl cis-trans isomerase FKBP4, N-terminally processed; partial (Thr-2). Positions 50-138 constitute a PPIase FKBP-type 1 domain; it reads GDRVFVHYTG…VFEVELFEFK (89 aa). The residue at position 143 (Thr-143) is a Phosphothreonine; by CK2. Residues 167–253 enclose the PPIase FKBP-type 2 domain; the sequence is GAMVEVALEG…RYEVHLKSFE (87 aa). Tyr-220 carries the phosphotyrosine modification. The interval 267-400 is interaction with tubulin; the sequence is LEQSNIVKER…TQLAVCQQRT (134 aa). 3 TPR repeats span residues 270–303, 319–352, and 353–386; these read SNIV…LEYE, LASH…DSNN, and EKGL…YPSN. Lys-282 carries the N6-acetyllysine modification. Residue Arg-373 is modified to Omega-N-methylarginine. The interval 423-458 is disordered; the sequence is HKAKTEVAAGDHPTDAEMKGEPNNVAGNQAQVKTEA. Thr-436 is modified (phosphothreonine). A Glycyl lysine isopeptide (Lys-Gly) (interchain with G-Cter in SUMO1) cross-link involves residue Lys-441. Over residues 447–458 the composition is skewed to polar residues; that stretch reads VAGNQAQVKTEA.

In terms of assembly, homodimer. Interacts with GLMN. Associates with HSP90AA1 and HSP70 in steroid hormone receptor complexes. Also interacts with peroxisomal phytanoyl-CoA alpha-hydroxylase (PHYH). Interacts with NR3C1 and dynein. Interacts with HSF1 in the HSP90 complex. Associates with tubulin. Interacts with MAPT/TAU. Interacts (via TPR domain) with S100A1, S100A2 and S100A6; the interaction is Ca(2+) dependent. Interaction with S100A1 and S100A2 (but not with S100A6) leads to inhibition of FKBP4-HSP90 interaction. Interacts with dynein; causes partially NR3C1 transport to the nucleus. In terms of processing, phosphorylation by CK2 results in loss of HSP90 binding activity. As to expression, widely detected in the brain (at protein level).

It is found in the cytoplasm. The protein resides in the cytosol. The protein localises to the mitochondrion. It localises to the nucleus. Its subcellular location is the cytoskeleton. It is found in the cell projection. The protein resides in the axon. The catalysed reaction is [protein]-peptidylproline (omega=180) = [protein]-peptidylproline (omega=0). Its activity is regulated as follows. Inhibited by FK506. In terms of biological role, immunophilin protein with PPIase and co-chaperone activities. Component of unligated steroid receptors heterocomplexes through interaction with heat-shock protein 90 (HSP90). Plays a role in the intracellular trafficking of heterooligomeric forms of steroid hormone receptors between cytoplasm and nuclear compartments. May have a protective role against oxidative stress in mitochondria. Also acts as a regulator of microtubule dynamics by inhibiting MAPT/TAU ability to promote microtubule assembly. The PPIase activity controls neuronal growth cones via regulation of TRPC1 channel opening. The chain is Peptidyl-prolyl cis-trans isomerase FKBP4 (Fkbp4) from Rattus norvegicus (Rat).